The following is a 90-amino-acid chain: MAHKKAGGSSRNGRDSAGKRLGIKAYGGERVIPGNIIARQRGTTWHPGLNVGMGTDHTLFAKVEGHVEFRAKANGRTFVSVLPIAVAAAE.

Residues 1–20 form a disordered region; the sequence is MAHKKAGGSSRNGRDSAGKR.

It belongs to the bacterial ribosomal protein bL27 family.

This Rhodopseudomonas palustris (strain BisB18) protein is Large ribosomal subunit protein bL27.